The following is a 151-amino-acid chain: Transcriptional regulator MraZ (151 aa).

2 SpoVT-AbrB domains span residues Ala5–Glu51 and Ala81–Gln124.

The protein belongs to the MraZ family. Forms oligomers.

The protein resides in the cytoplasm. It localises to the nucleoid. In Neisseria meningitidis serogroup A / serotype 4A (strain DSM 15465 / Z2491), this protein is Transcriptional regulator MraZ.